Reading from the N-terminus, the 122-residue chain is Small ribosomal subunit protein uS13 (122 aa).

Residues 93-122 form a disordered region; the sequence is RRGLPVRGQRTKTNARTRKGPKKTVAGKKK.

The protein belongs to the universal ribosomal protein uS13 family. As to quaternary structure, part of the 30S ribosomal subunit. Forms a loose heterodimer with protein S19. Forms two bridges to the 50S subunit in the 70S ribosome.

In terms of biological role, located at the top of the head of the 30S subunit, it contacts several helices of the 16S rRNA. In the 70S ribosome it contacts the 23S rRNA (bridge B1a) and protein L5 of the 50S subunit (bridge B1b), connecting the 2 subunits; these bridges are implicated in subunit movement. Contacts the tRNAs in the A and P-sites. In Micrococcus luteus (strain ATCC 4698 / DSM 20030 / JCM 1464 / CCM 169 / CCUG 5858 / IAM 1056 / NBRC 3333 / NCIMB 9278 / NCTC 2665 / VKM Ac-2230) (Micrococcus lysodeikticus), this protein is Small ribosomal subunit protein uS13.